Consider the following 124-residue polypeptide: Acidic phospholipase A2 BA2 (124 aa).

Cystine bridges form between Cys26-Cys116, Cys28-Cys44, Cys43-Cys95, Cys49-Cys124, Cys50-Cys88, Cys57-Cys81, and Cys75-Cys86. The Ca(2+) site is built by Tyr27, Gly29, and Gly31. His47 is a catalytic residue. Asp48 is a Ca(2+) binding site. Residue Asp89 is part of the active site.

The protein belongs to the phospholipase A2 family. Group II subfamily. D49 sub-subfamily. Ca(2+) serves as cofactor. As to expression, expressed by the venom gland.

It is found in the secreted. The enzyme catalyses a 1,2-diacyl-sn-glycero-3-phosphocholine + H2O = a 1-acyl-sn-glycero-3-phosphocholine + a fatty acid + H(+). PLA2 catalyzes the calcium-dependent hydrolysis of the 2-acyl groups in 3-sn-phosphoglycerides. The chain is Acidic phospholipase A2 BA2 from Gloydius halys (Chinese water mocassin).